The following is a 137-amino-acid chain: Cucumber peeling cupredoxin (137 aa).

Pyrrolidone carboxylic acid is present on Gln1. The Phytocyanin domain occupies 3–107 (TVHIVGDNTG…GQKLSINVVA (105 aa)). Cu cation is bound by residues His46, Cys89, His94, and Gln99. The cysteines at positions 60 and 95 are disulfide-linked. N-linked (GlcNAc...) asparagine glycosylation occurs at Asn109. The tract at residues 112 to 137 (VSMPPPSSSPPSSVMPPPVMPPPSPS) is disordered. The segment covering 114-137 (MPPPSSSPPSSVMPPPVMPPPSPS) has biased composition (pro residues). Pro115 bears the 4-hydroxyproline; partial mark. 4 positions are modified to 4-hydroxyproline: Pro116, Pro117, Pro121, and Pro122. Residue Pro127 is modified to 4-hydroxyproline; partial. Residues Pro128, Pro129, Pro133, Pro134, and Pro136 each carry the 4-hydroxyproline modification.

The sequence is that of Cucumber peeling cupredoxin from Cucumis sativus (Cucumber).